Consider the following 302-residue polypeptide: Homoserine O-acetyltransferase (302 aa).

Residue Cys-142 is the Acyl-thioester intermediate of the active site. 2 residues coordinate substrate: Lys-163 and Ser-192. His-235 serves as the catalytic Proton acceptor. Glu-237 is an active-site residue. A substrate-binding site is contributed by Arg-249.

Belongs to the MetA family.

The protein localises to the cytoplasm. The enzyme catalyses L-homoserine + acetyl-CoA = O-acetyl-L-homoserine + CoA. It participates in amino-acid biosynthesis; L-methionine biosynthesis via de novo pathway; O-acetyl-L-homoserine from L-homoserine: step 1/1. Transfers an acetyl group from acetyl-CoA to L-homoserine, forming acetyl-L-homoserine. The chain is Homoserine O-acetyltransferase from Bacillus licheniformis (strain ATCC 14580 / DSM 13 / JCM 2505 / CCUG 7422 / NBRC 12200 / NCIMB 9375 / NCTC 10341 / NRRL NRS-1264 / Gibson 46).